Here is a 248-residue protein sequence, read N- to C-terminus: Transcriptional activator protein FnrL (248 aa).

One can recognise an HTH crp-type domain in the interval 154–232; that stretch reads KTAREKIASL…KRHVIVTDFA (79 aa). The H-T-H motif DNA-binding region spans 191-210; that stretch reads REEMADYLGLTLETVSRQVS.

Functionally, anaerobic regulatory protein; transcriptional activator of hemA. Appears to regulate other genes. The polypeptide is Transcriptional activator protein FnrL (fnrL) (Cereibacter sphaeroides (strain ATCC 17023 / DSM 158 / JCM 6121 / CCUG 31486 / LMG 2827 / NBRC 12203 / NCIMB 8253 / ATH 2.4.1.) (Rhodobacter sphaeroides)).